The primary structure comprises 676 residues: A-type ATP synthase subunit I (676 aa).

Transmembrane regions (helical) follow at residues 341–361, 390–410, 449–469, 490–510, 538–558, 564–584, 590–610, and 617–637; these read VFIA…IGYG, AGVM…PFIV, ILLF…FALG, IIGV…VGVF, LNVY…LFVM, MGAM…QIMS, AIGL…MKLI, and IPIV…ILGI.

This sequence belongs to the V-ATPase 116 kDa subunit family. In terms of assembly, has multiple subunits with at least A(3), B(3), C, D, E, F, H, I and proteolipid K(x).

The protein resides in the cell membrane. In terms of biological role, component of the A-type ATP synthase that produces ATP from ADP in the presence of a proton gradient across the membrane. The polypeptide is A-type ATP synthase subunit I (Archaeoglobus fulgidus (strain ATCC 49558 / DSM 4304 / JCM 9628 / NBRC 100126 / VC-16)).